Here is a 156-residue protein sequence, read N- to C-terminus: Movement protein P17 (156 aa).

The interval 38 to 54 is homodimerization; it reads AEDVEEEAIAAQEELEF. Residues 57-156 form an RNA-binding region; sequence DEAQARHSCL…RAAPKLIKRG (100 aa). Phosphoserine is present on residues Ser-71, Ser-79, Ser-137, and Ser-140. A disordered region spans residues 106 to 156; sequence ASYFSSSARPLPPPPAPSLMSWTPIAKYHPSSPTSTSSKLRRAAPKLIKRG. Basic residues predominate over residues 144–156; sequence KLRRAAPKLIKRG.

It belongs to the polerovirus movement protein family. In terms of assembly, homodimer. In terms of processing, expressed as a nonphosphorylated 20kDa form and a phosphorylated 22kDa form. Phosphorylated by a host PKC-related kinase. Serine phosphorylation is required for plamodesma targeting.

Its subcellular location is the host cell junction. It localises to the host plasmodesma. It is found in the host chloroplast envelope. The protein localises to the host Golgi apparatus. The protein resides in the host mitochondrion outer membrane. In terms of biological role, together with movement protein P3a, facilitates long-distance movement of virions in host. Transports viral genome to neighboring plant cells directly through plasmosdesmata, without any budding. The movement protein allows efficient cell to cell propagation, by bypassing the host cell wall barrier. Binds ssRNA. The chain is Movement protein P17 from Solanum tuberosum (Potato).